The primary structure comprises 361 residues: tRNA-specific 2-thiouridylase MnmA (361 aa).

Residues Ala8–Ser15 and Met34 contribute to the ATP site. The Nucleophile role is filled by Cys104. Residues Cys104 and Cys202 are joined by a disulfide bond. ATP is bound at residue Gly128. Positions Lys152–Gln154 are interaction with tRNA. Residue Cys202 is the Cysteine persulfide intermediate of the active site. Residues Arg307–Tyr308 are interaction with tRNA.

The protein belongs to the MnmA/TRMU family.

The protein localises to the cytoplasm. It carries out the reaction S-sulfanyl-L-cysteinyl-[protein] + uridine(34) in tRNA + AH2 + ATP = 2-thiouridine(34) in tRNA + L-cysteinyl-[protein] + A + AMP + diphosphate + H(+). In terms of biological role, catalyzes the 2-thiolation of uridine at the wobble position (U34) of tRNA, leading to the formation of s(2)U34. This is tRNA-specific 2-thiouridylase MnmA from Caldicellulosiruptor saccharolyticus (strain ATCC 43494 / DSM 8903 / Tp8T 6331).